A 544-amino-acid polypeptide reads, in one-letter code: Membrane protein insertase YidC (544 aa).

Transmembrane regions (helical) follow at residues 13 to 33, 343 to 363, 409 to 429, 461 to 481, and 506 to 526; these read LSLF…SNIL, WGLS…PLTF, LGGC…YSLV, LYFV…FTQL, and MPIM…IYWI.

The protein belongs to the OXA1/ALB3/YidC family. Type 1 subfamily. In terms of assembly, interacts with the Sec translocase complex via SecD. Specifically interacts with transmembrane segments of nascent integral membrane proteins during membrane integration.

The protein resides in the cell inner membrane. Required for the insertion and/or proper folding and/or complex formation of integral membrane proteins into the membrane. Involved in integration of membrane proteins that insert both dependently and independently of the Sec translocase complex, as well as at least some lipoproteins. Aids folding of multispanning membrane proteins. This chain is Membrane protein insertase YidC, found in Borreliella burgdorferi (strain ZS7) (Borrelia burgdorferi).